The chain runs to 217 residues: Ribosomal large subunit pseudouridine synthase E (217 aa).

Catalysis depends on Asp-79, which acts as the Nucleophile.

Belongs to the pseudouridine synthase RsuA family.

The enzyme catalyses uridine(2457) in 23S rRNA = pseudouridine(2457) in 23S rRNA. Responsible for synthesis of pseudouridine from uracil-2457 in 23S ribosomal RNA. This Escherichia coli O6:H1 (strain CFT073 / ATCC 700928 / UPEC) protein is Ribosomal large subunit pseudouridine synthase E (rluE).